A 248-amino-acid polypeptide reads, in one-letter code: Tyrosine recombinase XerD-like (248 aa).

In terms of domain architecture, Core-binding (CB) spans 1 to 72 (MKSYIEPFIA…TANQFLYYLY (72 aa)). In terms of domain architecture, Tyr recombinase spans 85–248 (DTMKVMRTEK…PVTLEKYYKS (164 aa)). Catalysis depends on residues lysine 149 and arginine 213. Catalysis depends on tyrosine 245, which acts as the O-(3'-phospho-DNA)-tyrosine intermediate.

This sequence belongs to the 'phage' integrase family. XerD-like subfamily.

The protein resides in the cytoplasm. Putative tyrosine recombinase. Not involved in the cutting and rejoining of the recombining DNA molecules on dif(SL) site. The sequence is that of Tyrosine recombinase XerD-like from Streptococcus pyogenes serotype M3 (strain ATCC BAA-595 / MGAS315).